The primary structure comprises 82 residues: Kappa-actitoxin-Avd4j (82 aa).

The N-terminal stretch at 1–19 (MNKALFLCLVVLCAAVVFA) is a signal peptide. Residues 20–31 (AEDLQKAKHAPF) constitute a propeptide that is removed on maturation. Cystine bridges form between C38–C73, C40–C66, and C56–C74.

It belongs to the sea anemone type 3 (BDS) potassium channel toxin family. Weakly expressed in the ectodermal tissue from the distal and proximal tentacles, body wall, and oral disk.

It is found in the secreted. The protein localises to the nematocyst. Its function is as follows. Blocks Kv3 voltage-gated potassium channels. Reduces blood pressure. The sequence is that of Kappa-actitoxin-Avd4j from Anemonia viridis (Snakelocks anemone).